The chain runs to 436 residues: GTPase Der (436 aa).

EngA-type G domains are found at residues 4-167 (PTVA…PVEE) and 175-351 (IRFS…ESQN). Residues 10–17 (GRPNVGKS), 57–61 (DTGGI), 119–122 (NKVD), 181–188 (GRPNVGKS), 229–233 (DTAGM), and 294–297 (NKWD) contribute to the GTP site. The 85-residue stretch at 352–436 (KRIPSAVLND…PIHLIARKRK (85 aa)) folds into the KH-like domain.

Belongs to the TRAFAC class TrmE-Era-EngA-EngB-Septin-like GTPase superfamily. EngA (Der) GTPase family. In terms of assembly, associates with the 50S ribosomal subunit.

GTPase that plays an essential role in the late steps of ribosome biogenesis. The sequence is that of GTPase Der from Streptococcus uberis (strain ATCC BAA-854 / 0140J).